Reading from the N-terminus, the 236-residue chain is UPF0502 protein Bpro_3844 (236 aa).

This sequence belongs to the UPF0502 family.

In Polaromonas sp. (strain JS666 / ATCC BAA-500), this protein is UPF0502 protein Bpro_3844.